A 429-amino-acid chain; its full sequence is Tubby-like F-box protein 5 (429 aa).

The F-box domain maps to 53-108 (TRWANLPAALLRDVMKKLDESESTWPARKQVVACAGVCKTWRLMCKDIVKSPEFSG). The interval 360–385 (QPGSGSDGGALATRPSLSPQQPEQSN) is disordered. Residues 374-383 (PSLSPQQPEQ) are compositionally biased toward polar residues.

It belongs to the TUB family. In terms of tissue distribution, mostly expressed in roots, flowers and siliques.

The chain is Tubby-like F-box protein 5 from Arabidopsis thaliana (Mouse-ear cress).